The sequence spans 103 residues: Mitochondrial import inner membrane translocase subunit Tim10 B (103 aa).

The Twin CX3C motif signature appears at 28–52 (CFQRCVPSLHHRALDAEEEACLHSC). Intrachain disulfides connect Cys28–Cys52 and Cys32–Cys48.

This sequence belongs to the small Tim family. In terms of assembly, component of the TIM22 complex, which core is composed of TIMM22, associated with TIMM10 (TIMM10A and/or TIMM10B), TIMM9, AGK and TIMM29. As to expression, ubiquitous, with highest expression in heart, kidney, liver and skeletal muscle.

The protein resides in the mitochondrion inner membrane. Functionally, component of the TIM22 complex, a complex that mediates the import and insertion of multi-pass transmembrane proteins into the mitochondrial inner membrane. The TIM22 complex forms a twin-pore translocase that uses the membrane potential as the external driving force. In the TIM22 complex, it may act as a docking point for the soluble 70 kDa complex that guides the target proteins in transit through the aqueous mitochondrial intermembrane space. The polypeptide is Mitochondrial import inner membrane translocase subunit Tim10 B (TIMM10B) (Homo sapiens (Human)).